A 201-amino-acid polypeptide reads, in one-letter code: Small ribosomal subunit protein uS4 (201 aa).

Residues serine 91–glutamate 151 enclose the S4 RNA-binding domain.

It belongs to the universal ribosomal protein uS4 family. In terms of assembly, part of the 30S ribosomal subunit. Contacts protein S5. The interaction surface between S4 and S5 is involved in control of translational fidelity.

One of the primary rRNA binding proteins, it binds directly to 16S rRNA where it nucleates assembly of the body of the 30S subunit. Functionally, with S5 and S12 plays an important role in translational accuracy. The protein is Small ribosomal subunit protein uS4 of Corynebacterium efficiens (strain DSM 44549 / YS-314 / AJ 12310 / JCM 11189 / NBRC 100395).